The chain runs to 362 residues: Protein mab-21-like 3 (362 aa).

The protein belongs to the mab-21 family.

This chain is Protein mab-21-like 3 (MAB21L3), found in Homo sapiens (Human).